Here is a 226-residue protein sequence, read N- to C-terminus: Probable septum site-determining protein MinC (226 aa).

Belongs to the MinC family. As to quaternary structure, interacts with MinD and FtsZ.

In terms of biological role, cell division inhibitor that blocks the formation of polar Z ring septums. Rapidly oscillates between the poles of the cell to destabilize FtsZ filaments that have formed before they mature into polar Z rings. Prevents FtsZ polymerization. The protein is Probable septum site-determining protein MinC of Edwardsiella ictaluri (strain 93-146).